Here is a 258-residue protein sequence, read N- to C-terminus: 6-phosphogluconolactonase (258 aa).

N-acetylalanine is present on alanine 2. Serine 49 is subject to Phosphoserine. Lysine 180 carries the post-translational modification N6-acetyllysine.

Belongs to the glucosamine/galactosamine-6-phosphate isomerase family. 6-phosphogluconolactonase subfamily.

The protein resides in the cytoplasm. It carries out the reaction 6-phospho-D-glucono-1,5-lactone + H2O = 6-phospho-D-gluconate + H(+). The protein operates within carbohydrate degradation; pentose phosphate pathway; D-ribulose 5-phosphate from D-glucose 6-phosphate (oxidative stage): step 2/3. Its function is as follows. Hydrolysis of 6-phosphogluconolactone to 6-phosphogluconate. The protein is 6-phosphogluconolactonase (PGLS) of Bos taurus (Bovine).